The chain runs to 339 residues: MVREEVAGSTQTLQWKCVESRVDSKRLYYGRFILSPLRKGQADTVGIALRRALLGEIEGTCITRAKFWSVPHEYSTIAGIEESVQEILLNLKEIVLRSNLYGVRDASICVKGPRYITAQDIILPPSVEIVDTAQPIANLTEPIDFCIDLQIKRDRGYQTELRKNYQDGSYPIDAVSMPVRNVNYSIFSCGNGNEKHEILFLEIWTNGSLTPKEALYEASRNLIDLFLPFLHAEEEGTSFEENKNRFTPPLFTFQKRLTNLKKNKKGIPLNCIFIDQLELTSRTYNCLKRANIHTLLDLLSKTEEDLLRIDSFRMEDRKHIWDTLEKHLPIDLLKNKLSF.

The tract at residues 1–233 (MVREEVAGST…DLFLPFLHAE (233 aa)) is alpha N-terminal domain (alpha-NTD). Residues 264 to 339 (KKGIPLNCIF…IDLLKNKLSF (76 aa)) form an alpha C-terminal domain (alpha-CTD) region.

The protein belongs to the RNA polymerase alpha chain family. In plastids the minimal PEP RNA polymerase catalytic core is composed of four subunits: alpha, beta, beta', and beta''. When a (nuclear-encoded) sigma factor is associated with the core the holoenzyme is formed, which can initiate transcription.

It is found in the plastid. The protein resides in the chloroplast. The enzyme catalyses RNA(n) + a ribonucleoside 5'-triphosphate = RNA(n+1) + diphosphate. Functionally, DNA-dependent RNA polymerase catalyzes the transcription of DNA into RNA using the four ribonucleoside triphosphates as substrates. The sequence is that of DNA-directed RNA polymerase subunit alpha from Festucopsis serpentini.